Consider the following 480-residue polypeptide: MNAVTKITPHTDYKIADISLADWGRKELDIAEHEMPGLMSIRRKHAQTKPLKDVRITGSLHMTIQTAVLIETLKDIGADVRWASCNIFSTQDHAAAAIAATGTPVFAWKGETLEEYWDCTLDALTFTLPDGTLTGPELVVDDGGDVTLLIHKGYELENGSTWVDEPASSHEEGVIKALLKRVAVERPGYWGRVVKDWKGVSEETTTGVHRLYQIAEAGKLLIPAINVNDSVTKSKFDNLYGCRESLADGLKRAMDVMLAGKVAVVCGYGDVGKGSAASLRAYGARVIVTEIDPICALQASMEGFEVNTIESTLGRADIYVTTTGNKDIITVEHLQAMKDQAIVCNIGHFDNEIQVDALKALKDVQKINIKPQVDKYVFPNGNAIFLLADGRLVNLGCATGHPSFVMSNSFANQTLAQIDLWEKRDTYEKKVYILPKHLDEEVARLHLEKIGVKLTTLTKDQADYLGVDVAGPYKPDHYRY.

Residues Thr63, Asp142, and Glu203 each coordinate substrate. 204–206 (TTT) is an NAD(+) binding site. Residues Lys233 and Asp237 each contribute to the substrate site. Residues Asn238, 267 to 272 (GYGDVG), Glu290, Asn325, 346 to 348 (IGH), and Asn394 each bind NAD(+).

The protein belongs to the adenosylhomocysteinase family. Requires NAD(+) as cofactor.

Its subcellular location is the cytoplasm. The enzyme catalyses S-adenosyl-L-homocysteine + H2O = L-homocysteine + adenosine. The protein operates within amino-acid biosynthesis; L-homocysteine biosynthesis; L-homocysteine from S-adenosyl-L-homocysteine: step 1/1. Its function is as follows. May play a key role in the regulation of the intracellular concentration of adenosylhomocysteine. The polypeptide is Adenosylhomocysteinase (Xanthomonas axonopodis pv. citri (strain 306)).